The following is a 776-amino-acid chain: Ankyrin repeat and EF-hand domain-containing protein 1 (776 aa).

ANK repeat units lie at residues 47–76 (NGLSALHLASVSNDIDMVSFLLDLGAHPDV), 184–213 (TGRTALMEASREGVVEIVRGILERGGEVNA), 217–246 (DRHHAAHFAAKGGFFDILKLLFAYNGDVGL), and 250–279 (NGNTPLHYAAMGGFADCCKYIAQRGCDLKW). Residues 335 to 369 (EREAFLREAFAVLDRGDGSISKNDFVMVLEERQDY) form the EF-hand domain. ANK repeat units follow at residues 524 to 553 (YYKTPLMTACASGNIDVVKFLLEKGANVNA), 557 to 586 (FLWTPLHFACHAGQQDIVELLVESGALIDA), 590 to 619 (NNSTPLNRAIESCRLDTVKYLLDIGAKFQL), and 623 to 652 (KGHSAMDVAKAYADYRIIDLIKEKLDNLPK).

The sequence is that of Ankyrin repeat and EF-hand domain-containing protein 1 (ANKEF1) from Homo sapiens (Human).